A 122-amino-acid chain; its full sequence is Large ribosomal subunit protein uL14 (122 aa).

The protein belongs to the universal ribosomal protein uL14 family. As to quaternary structure, part of the 50S ribosomal subunit. Forms a cluster with proteins L3 and L19. In the 70S ribosome, L14 and L19 interact and together make contacts with the 16S rRNA in bridges B5 and B8.

Its function is as follows. Binds to 23S rRNA. Forms part of two intersubunit bridges in the 70S ribosome. This is Large ribosomal subunit protein uL14 from Desulfosudis oleivorans (strain DSM 6200 / JCM 39069 / Hxd3) (Desulfococcus oleovorans).